The following is a 93-amino-acid chain: Molybdopterin synthase sulfur carrier subunit (93 aa).

Gly-93 is modified (1-thioglycine; alternate). Gly-93 is modified (glycyl adenylate; alternate).

It belongs to the MoaD family. MOCS2A subfamily. In terms of assembly, heterotetramer; composed of 2 small (MOCS2A) and 2 large (MOCS2B) subunits. C-terminal thiocarboxylation occurs in 2 steps, it is first acyl-adenylated (-COAMP) via the hesA/moeB/thiF part of UBA4, then thiocarboxylated (-COSH) via the rhodanese domain of UBA4.

The protein resides in the cytoplasm. It participates in cofactor biosynthesis; molybdopterin biosynthesis. Functionally, acts as a sulfur carrier required for molybdopterin biosynthesis. Component of the molybdopterin synthase complex that catalyzes the conversion of precursor Z into molybdopterin by mediating the incorporation of 2 sulfur atoms into precursor Z to generate a dithiolene group. In the complex, serves as sulfur donor by being thiocarboxylated (-COSH) at its C-terminus by UBA4. After interaction with MOCS2B, the sulfur is then transferred to precursor Z to form molybdopterin. The protein is Molybdopterin synthase sulfur carrier subunit of Mycosarcoma maydis (Corn smut fungus).